The primary structure comprises 838 residues: MTMIETQLRSLLVTTKPIRDLTIDAVIAATKRAEQRIAPLWPLRYFVAVNPYLGLIDHTFADAAQLLARRTDARMTAPRDFYAQAIKSGRITDADLAAAIADEKLPSPAPASVAALKEFAFSKDPDPATTPLPTIADVATTVTGINWADFVTDAISTWAGAYFDLGQSYWRSPWAQLPAYAAWRAEAAHDRTAQARGVHGMRRALRELPETALETIVTAVKMLNIPEQGLEAYLHRLLLTIHGWASYARYLRWDAELYGGEDHTLTDLLAIRLVWEVALWHSFADRGVAEAWHKCKPELSNEQLTETARYALAGNILLQRAFEKSYQRQLFARLGTARPATTPQRKRVQAAFCIDVRSEIFRRALETTTDDIETIGFAGFFGFPIEYVPLAEVHGGAQCPVLLTPQFVIAEAVDGASTDEVAKIIERRALRQRVAKAWRMFKFAPISCFGFVGPVGLAYLRKLVLDTLGITRPVPHPAQFGLDARTREHVAPILEPGLIGDRPTGMTLEQRVAAAAGALKAMSLTDNFARIVLLAGHGSTTVNNPHATGLDCGACGGHTGEANVRVAVRILNDPAVRTKLKEQGIVIPDDTVFVAALHDTTTDDITIFDKHMIPASHADDLKRLEADLAAAGRLARAERAALLKIDRKADIDRQVRQRSKDWSQVRPEWGLAGCAAFIAAPRDRTAGIKLDGRSFLHSYTWQQDSDFSVLELIMTAPMIVASWINLQYYGSTVDNRLFGSGNKTLHNVVGTLGVLEGNAGDLRVGLPWQSVHDGENYVHEPMRLHVLIEAPIPAMTAIIAKHEQVRQLLDNGWLYLFALDDRGVVTHKYAGNLQWEPV.

The Zn(2+) site is built by cysteine 353, aspartate 355, histidine 537, and cysteine 552.

It belongs to the inorganic carbon transporter (TC 9.A.2) DabA family. As to quaternary structure, forms a complex with DabB. It depends on Zn(2+) as a cofactor.

It localises to the cell membrane. Functionally, part of an energy-coupled inorganic carbon pump. The protein is Probable inorganic carbon transporter subunit DabA of Chloroflexus aurantiacus (strain ATCC 29366 / DSM 635 / J-10-fl).